The sequence spans 210 residues: ATP-dependent Clp protease proteolytic subunit (210 aa).

S107 acts as the Nucleophile in catalysis. H132 is an active-site residue.

Belongs to the peptidase S14 family. In terms of assembly, fourteen ClpP subunits assemble into 2 heptameric rings which stack back to back to give a disk-like structure with a central cavity, resembling the structure of eukaryotic proteasomes.

It localises to the cytoplasm. It carries out the reaction Hydrolysis of proteins to small peptides in the presence of ATP and magnesium. alpha-casein is the usual test substrate. In the absence of ATP, only oligopeptides shorter than five residues are hydrolyzed (such as succinyl-Leu-Tyr-|-NHMec, and Leu-Tyr-Leu-|-Tyr-Trp, in which cleavage of the -Tyr-|-Leu- and -Tyr-|-Trp bonds also occurs).. Functionally, cleaves peptides in various proteins in a process that requires ATP hydrolysis. Has a chymotrypsin-like activity. Plays a major role in the degradation of misfolded proteins. This is ATP-dependent Clp protease proteolytic subunit from Ruegeria sp. (strain TM1040) (Silicibacter sp.).